Here is a 449-residue protein sequence, read N- to C-terminus: DNA-directed RNA polymerase subunit Rpo1C (449 aa).

The tract at residues 1–68 is unknown; the sequence is MQDVIKKIED…EGEELLKAVE (68 aa). The tract at residues 69–449 is DNA-directed RNA polymerase subunit Rpo1C; that stretch reads DEYLRILKVR…TGSVSVIMKK (381 aa).

This sequence belongs to the RNA polymerase beta' chain family. Part of the RNA polymerase complex.

It localises to the cytoplasm. It carries out the reaction RNA(n) + a ribonucleoside 5'-triphosphate = RNA(n+1) + diphosphate. DNA-dependent RNA polymerase (RNAP) catalyzes the transcription of DNA into RNA using the four ribonucleoside triphosphates as substrates. Forms part of the jaw domain. The polypeptide is DNA-directed RNA polymerase subunit Rpo1C (Methanothermobacter thermautotrophicus (strain Winter) (Methanobacterium thermoautotrophicum)).